Reading from the N-terminus, the 167-residue chain is Peptidyl-prolyl cis-trans isomerase-like 3 (167 aa).

Positions 1–160 constitute a PPIase cyclophilin-type domain; sequence MSVTLHTSHG…EPVRIENVTI (160 aa).

It belongs to the cyclophilin-type PPIase family. PPIL3 subfamily.

The catalysed reaction is [protein]-peptidylproline (omega=180) = [protein]-peptidylproline (omega=0). Functionally, PPIases accelerate the folding of proteins. It catalyzes the cis-trans isomerization of proline imidic peptide bonds in oligopeptides. The protein is Peptidyl-prolyl cis-trans isomerase-like 3 (CYP10) of Gibberella zeae (strain ATCC MYA-4620 / CBS 123657 / FGSC 9075 / NRRL 31084 / PH-1) (Wheat head blight fungus).